A 431-amino-acid polypeptide reads, in one-letter code: MSVIQDLQSRGLIAQTTDIEALDALLNEQKIALYCGFDPTADSLHIGHLLPVLALRRFQQAGHTPIALVGGATGMIGDPSFKAAERSLNSAETVAGWVESIRNQLTPFLSFEGGNAAIMANNADWFGKMNCLDFLRDIGKHFSVNAMLNKESVKQRIDRDGAGISFTEFAYSLLQGYDFAELNKRHGAVLEIGGSDQWGNITAGIDLTRRLNQKQVFGLTLPLVTKSDGTKFGKTEGGAVWLNAKKTSPYQFYQFWLKVADADVYKFLKYFTFLSIEEIDAIEAKDKASGTKPEAQRILAEEMTRLIHGEAALQAAQRISESLFAEDQSSLTESDFEQLALDGLPAFEVSDGINVVEALVKTGLASSNKEARGFVNSKAVLLNGKPAEANNPNHAAERPDDACLLTDEHKRFGKYTILRRGKRNHALLVWK.

Tyr-34 lines the L-tyrosine pocket. Positions 39–48 (PTADSLHIGH) match the 'HIGH' region motif. L-tyrosine-binding residues include Tyr-171 and Gln-175. A 'KMSKS' region motif is present at residues 231 to 235 (KFGKT). Lys-234 contributes to the ATP binding site. The 70-residue stretch at 353–422 (INVVEALVKT…GKYTILRRGK (70 aa)) folds into the S4 RNA-binding domain.

The protein belongs to the class-I aminoacyl-tRNA synthetase family. TyrS type 1 subfamily. As to quaternary structure, homodimer.

It is found in the cytoplasm. It catalyses the reaction tRNA(Tyr) + L-tyrosine + ATP = L-tyrosyl-tRNA(Tyr) + AMP + diphosphate + H(+). Catalyzes the attachment of tyrosine to tRNA(Tyr) in a two-step reaction: tyrosine is first activated by ATP to form Tyr-AMP and then transferred to the acceptor end of tRNA(Tyr). The polypeptide is Tyrosine--tRNA ligase (Neisseria meningitidis serogroup A / serotype 4A (strain DSM 15465 / Z2491)).